We begin with the raw amino-acid sequence, 272 residues long: Phosphonates import ATP-binding protein PhnC (272 aa).

The ABC transporter domain occupies 2-246 (LELQRLTKTY…VLATIYGAED (245 aa)). 35–42 (GPSGAGKS) lines the ATP pocket. A disordered region spans residues 248–272 (ASSGREPAPEREPEDTERHLAEVGR). A compositionally biased stretch (basic and acidic residues) spans 254–272 (PAPEREPEDTERHLAEVGR).

It belongs to the ABC transporter superfamily. Phosphonates importer (TC 3.A.1.9.1) family. As to quaternary structure, the complex is composed of two ATP-binding proteins (PhnC), two transmembrane proteins (PhnE) and a solute-binding protein (PhnD).

It localises to the cell inner membrane. It carries out the reaction phosphonate(out) + ATP + H2O = phosphonate(in) + ADP + phosphate + H(+). In terms of biological role, part of the ABC transporter complex PhnCDE involved in phosphonates import. Responsible for energy coupling to the transport system. In Chromohalobacter salexigens (strain ATCC BAA-138 / DSM 3043 / CIP 106854 / NCIMB 13768 / 1H11), this protein is Phosphonates import ATP-binding protein PhnC.